The sequence spans 347 residues: Probable dual-specificity RNA methyltransferase RlmN (347 aa).

The Proton acceptor role is filled by Glu-90. One can recognise a Radical SAM core domain in the interval 96-326 (YKHGNSICIS…VTVRREMGSD (231 aa)). Cysteines 103 and 331 form a disulfide. [4Fe-4S] cluster-binding residues include Cys-110, Cys-114, and Cys-117. Residues 157-158 (GE), Ser-189, 212-214 (SLH), and Asn-288 each bind S-adenosyl-L-methionine. Cys-331 acts as the S-methylcysteine intermediate in catalysis.

This sequence belongs to the radical SAM superfamily. RlmN family. [4Fe-4S] cluster serves as cofactor.

The protein localises to the cytoplasm. The enzyme catalyses adenosine(2503) in 23S rRNA + 2 reduced [2Fe-2S]-[ferredoxin] + 2 S-adenosyl-L-methionine = 2-methyladenosine(2503) in 23S rRNA + 5'-deoxyadenosine + L-methionine + 2 oxidized [2Fe-2S]-[ferredoxin] + S-adenosyl-L-homocysteine. The catalysed reaction is adenosine(37) in tRNA + 2 reduced [2Fe-2S]-[ferredoxin] + 2 S-adenosyl-L-methionine = 2-methyladenosine(37) in tRNA + 5'-deoxyadenosine + L-methionine + 2 oxidized [2Fe-2S]-[ferredoxin] + S-adenosyl-L-homocysteine. In terms of biological role, specifically methylates position 2 of adenine 2503 in 23S rRNA and position 2 of adenine 37 in tRNAs. The protein is Probable dual-specificity RNA methyltransferase RlmN of Clostridium botulinum (strain Eklund 17B / Type B).